We begin with the raw amino-acid sequence, 270 residues long: uncharacterized protein (270 aa).

This sequence belongs to the GSP E family.

This is an uncharacterized protein from Methanocaldococcus jannaschii (strain ATCC 43067 / DSM 2661 / JAL-1 / JCM 10045 / NBRC 100440) (Methanococcus jannaschii).